A 396-amino-acid polypeptide reads, in one-letter code: Cell adhesion molecule 3 (396 aa).

Residues 1-22 (MGAPSALPLLLLLACSWAPGGA) form the signal peptide. Positions 23 to 124 (NLSQDDSQPW…VRTAKSLVTV (102 aa)) constitute an Ig-like V-type domain. At 23 to 328 (NLSQDDSQPW…PVPSSSSTYH (306 aa)) the chain is on the extracellular side. 3 disulfide bridges follow: cysteine 48/cysteine 108, cysteine 150/cysteine 207, and cysteine 252/cysteine 297. Ig-like C2-type domains follow at residues 128-226 (PQKP…QRIE) and 231-313 (PTAM…FTLN). Residue asparagine 288 is glycosylated (N-linked (GlcNAc...) asparagine). Residues 329-349 (AIIGGIVAFIVFLLLILLIFL) form a helical membrane-spanning segment. The Cytoplasmic segment spans residues 350–396 (GHYLIRHKGTYLTHEAKGSDDAPDADTAIINAEGGQSGGDDKKEYFI). The segment at 365-396 (AKGSDDAPDADTAIINAEGGQSGGDDKKEYFI) is disordered. Position 386 is a phosphoserine (serine 386).

This sequence belongs to the nectin family. In terms of assembly, homodimer. Can form trans-heterodimers with NECTIN3. Interacts with EPB41L1, DLG3, PALS2 and CASK. Mainly expressed in brain, in neuronal cell bodies of cerebellum, cortex, hippocampus, hypothalamus and spinal cord. In spinal cord predominantly expressed in motor neurons. Expressed in axons, presynaptic nerve terminals, glia cell processes.

Its subcellular location is the cell membrane. The protein resides in the cell junction. Functionally, involved in cell-cell adhesion. Has both calcium-independent homophilic cell-cell adhesion activity and calcium-independent heterophilic cell-cell adhesion activity with IGSF4, NECTIN1 and NECTIN3. Interaction with EPB41L1 may regulate structure or function of cell-cell junctions. The polypeptide is Cell adhesion molecule 3 (Cadm3) (Mus musculus (Mouse)).